The following is a 103-amino-acid chain: Cyclotide vitri-A (103 aa).

The first 9 residues, 1–9, serve as a signal peptide directing secretion; that stretch reads AAFALPAFA. The propeptide occupies 10–69; the sequence is SFEKDVITPAALEAVLNRKAPLSNIMMENDAIVNVIANVKTVISNPVLEEALLKTNHGVN. The cyclopeptide (Gly-Asn) cross-link spans 70-99; the sequence is GIPCGESCVWIPCITSAIGCSCKSKVCYRN. Disulfide bonds link cysteine 73–cysteine 89, cysteine 77–cysteine 91, and cysteine 82–cysteine 96. Residues 100 to 103 constitute a propeptide that is removed on maturation; that stretch reads SLDN.

Post-translationally, this is a cyclic peptide.

Probably participates in a plant defense mechanism. The polypeptide is Cyclotide vitri-A (Viola biflora (Yellow wood violet)).